A 317-amino-acid polypeptide reads, in one-letter code: L-lactate dehydrogenase (317 aa).

NAD(+)-binding positions include Val17, Asp38, Lys43, Tyr69, and 83–84 (GA). Substrate is bound by residues Gln86 and Arg92. Residues Ser105, 122–124 (ATN), and Ser147 each bind NAD(+). Residue 124-127 (NPVD) coordinates substrate. 152 to 155 (DTAR) contacts substrate. Residues Arg157 and His172 each coordinate beta-D-fructose 1,6-bisphosphate. His179 functions as the Proton acceptor in the catalytic mechanism. Tyr224 is subject to Phosphotyrosine. Thr233 provides a ligand contact to substrate.

Belongs to the LDH/MDH superfamily. LDH family. Homotetramer.

It is found in the cytoplasm. The enzyme catalyses (S)-lactate + NAD(+) = pyruvate + NADH + H(+). Its pathway is fermentation; pyruvate fermentation to lactate; (S)-lactate from pyruvate: step 1/1. With respect to regulation, allosterically activated by fructose 1,6-bisphosphate (FBP). In terms of biological role, catalyzes the conversion of lactate to pyruvate. This is L-lactate dehydrogenase from Geobacillus kaustophilus (strain HTA426).